The primary structure comprises 249 residues: Tetrahydromethanopterin S-methyltransferase subunit A (249 aa).

Residues 2-225 lie on the Cytoplasmic side of the membrane; sequence PEKAEPAEGW…YMAGYLSGRT (224 aa). H88 is a binding site for 5-hydroxybenzimidazolylcob(I)amide. Residues 226–246 form a helical membrane-spanning segment; that stretch reads MGLLIGIISGMIFLFLPMVVL. At 247-249 the chain is on the extracellular side; the sequence is GGV.

Belongs to the MtrA family. The complex is composed of 8 subunits; MtrA, MtrB, MtrC, MtrD, MtrE, MtrF, MtrG and MtrH. It depends on 5-hydroxybenzimidazolylcob(I)amide as a cofactor.

The protein localises to the cell membrane. It catalyses the reaction 5-methyl-5,6,7,8-tetrahydromethanopterin + coenzyme M + 2 Na(+)(in) = 5,6,7,8-tetrahydromethanopterin + methyl-coenzyme M + 2 Na(+)(out). It participates in one-carbon metabolism; methanogenesis from CO(2); methyl-coenzyme M from 5,10-methylene-5,6,7,8-tetrahydromethanopterin: step 2/2. Part of a complex that catalyzes the formation of methyl-coenzyme M and tetrahydromethanopterin from coenzyme M and methyl-tetrahydromethanopterin. This is an energy-conserving, sodium-ion translocating step. In Methanopyrus kandleri (strain AV19 / DSM 6324 / JCM 9639 / NBRC 100938), this protein is Tetrahydromethanopterin S-methyltransferase subunit A.